Here is a 101-residue protein sequence, read N- to C-terminus: uncharacterized protein (101 aa).

The chain crosses the membrane as a helical span at residues 72-94 (ILCPSFLNYSFINIYCFGPYTMV).

The protein resides in the membrane. This is an uncharacterized protein from Schizosaccharomyces pombe (strain 972 / ATCC 24843) (Fission yeast).